The sequence spans 156 residues: ATP synthase subunit b (156 aa).

A helical transmembrane segment spans residues 7 to 27; that stretch reads LIGQLIAFALFVAFCMKFVWP.

It belongs to the ATPase B chain family. F-type ATPases have 2 components, F(1) - the catalytic core - and F(0) - the membrane proton channel. F(1) has five subunits: alpha(3), beta(3), gamma(1), delta(1), epsilon(1). F(0) has three main subunits: a(1), b(2) and c(10-14). The alpha and beta chains form an alternating ring which encloses part of the gamma chain. F(1) is attached to F(0) by a central stalk formed by the gamma and epsilon chains, while a peripheral stalk is formed by the delta and b chains.

It localises to the cell inner membrane. Functionally, f(1)F(0) ATP synthase produces ATP from ADP in the presence of a proton or sodium gradient. F-type ATPases consist of two structural domains, F(1) containing the extramembraneous catalytic core and F(0) containing the membrane proton channel, linked together by a central stalk and a peripheral stalk. During catalysis, ATP synthesis in the catalytic domain of F(1) is coupled via a rotary mechanism of the central stalk subunits to proton translocation. Its function is as follows. Component of the F(0) channel, it forms part of the peripheral stalk, linking F(1) to F(0). This chain is ATP synthase subunit b, found in Actinobacillus pleuropneumoniae serotype 5b (strain L20).